The sequence spans 142 residues: Ornithine decarboxylase antizyme (142 aa).

The segment covering 1–19 (MSSSIVLSNNNSNSNSMSM) has biased composition (low complexity). The segment at 1 to 34 (MSSSIVLSNNNSNSNSMSMIGQSPPCCSDVPNTP) is disordered.

It belongs to the ODC antizyme family. Interacts with ODC1 and thereby sterically blocks ODC homodimerization.

Its function is as follows. Ornithine decarboxylase (ODC) antizyme protein that negatively regulates ODC activity and intracellular polyamine biosynthesis and uptake in response to increased intracellular polyamine levels. Binds to ODC monomers, inhibiting the assembly of the functional ODC homodimer, and targets the monomers for ubiquitin-independent proteolytic destruction by the 26S proteasome. The sequence is that of Ornithine decarboxylase antizyme from Pristionchus pacificus (Parasitic nematode).